The chain runs to 247 residues: Adenosylcobinamide-GDP ribazoletransferase (247 aa).

A run of 6 helical transmembrane segments spans residues 34–54 (IVMFPFIGLILGGVSGLIFIL), 59–79 (CGIPLAALFCILALALLTGGF), 113–133 (GGLALIFVLLAKILVVSELAL), 138–158 (MLAALAAACAAGRGSAVLLMY), 171–191 (VFIGKVSGRQTCITLGLAVIV), and 194–214 (VLLPGMQGLAAMVVTLAAIFI).

The protein belongs to the CobS family. Mg(2+) is required as a cofactor.

It localises to the cell inner membrane. It carries out the reaction alpha-ribazole + adenosylcob(III)inamide-GDP = adenosylcob(III)alamin + GMP + H(+). It catalyses the reaction alpha-ribazole 5'-phosphate + adenosylcob(III)inamide-GDP = adenosylcob(III)alamin 5'-phosphate + GMP + H(+). Its pathway is cofactor biosynthesis; adenosylcobalamin biosynthesis; adenosylcobalamin from cob(II)yrinate a,c-diamide: step 7/7. In terms of biological role, joins adenosylcobinamide-GDP and alpha-ribazole to generate adenosylcobalamin (Ado-cobalamin). Also synthesizes adenosylcobalamin 5'-phosphate from adenosylcobinamide-GDP and alpha-ribazole 5'-phosphate. In Salmonella schwarzengrund (strain CVM19633), this protein is Adenosylcobinamide-GDP ribazoletransferase.